Here is a 597-residue protein sequence, read N- to C-terminus: MEPAGHSSATHNIVVPNANPTQPQPLAPAMREEGATLSPPNTWSSSSVEFLDDADDNRLLFTCTFTLPHGTVLSSATYADGFHEQYLTIGDNFLARLEPKGQSFILSAAAASVKQRIFARVTMPDGALRACELLCEFETDRAKITVLALRSAFSLQASHVSSNFHVFTFITKHSSTCALTHIDYASIPYLGLLPTDLIGKSLLAFVYSPDVHVVRQAHIDLHNSRGKIVKSIADLRLVAHNGSILRCQTEWSAYVNPWTRKMELVVARHRICSLPIGDSDVISSPPPGIQSNTLPPVMAKTFEDELRTIMNKPVPSTSRHSHHHHHSSLKDQNQGFPANIDLGAYIDKIVEQLVVNSTAQQQQKVAVAAAAAAQAAQAAVVATAQIRKVASAPPTTSTDPPLSYTQINCLENVHRLLKSQSRPESPAKQDEPFDEKKYPPQTPLTREALTLHTKRFEDEYKDTWCRRLKRLSDDVPSSPPAKRTTPIHWTSSSQNHYRTMAPAPPPPPGKNYQITYTPLDDLTDQKSTNTKSDVENVAYPISGSKFSTPMRLSIDGLLPRGATSTGGASPTSGTNSPPVFPKTSSSSSLLMLRDSQN.

The disordered stretch occupies residues 1-44 (MEPAGHSSATHNIVVPNANPTQPQPLAPAMREEGATLSPPNTWS). The PAS domain maps to 155 to 223 (LQASHVSSNF…VRQAHIDLHN (69 aa)). Disordered regions lie at residues 313–335 (PVPS…QNQG), 418–450 (KSQS…EALT), 473–509 (DDVP…PPPG), and 555–597 (DGLL…DSQN). Residues 425–438 (SPAKQDEPFDEKKY) are compositionally biased toward basic and acidic residues. A compositionally biased stretch (polar residues) spans 487–497 (IHWTSSSQNHY). Positions 561-577 (GATSTGGASPTSGTNSP) are enriched in low complexity.

The protein localises to the nucleus. The protein resides in the cytoplasm. Its function is as follows. Transcriptional repressor which interacts with the promoter region of target genes. Has a specific role in developmental timing where it regulates temporal expression of a number of miRNAs and mRNAs. Controls temporal cell fate transition during embryonic and early larval development by restricting the expression of specific miRNAs, including let-7, miR-48, lin-4, miR-35 and miR-58. Restricts the accumulation of lin-29 in the hypodermis to the larval L4 stage, thus controlling terminal differentiation of seam cells. Has a role in the miRNA-mediated specification of asymmetric gene expression patterns in gustatory neurons. May also regulate genes involved in other biological processes including transport, small molecule metabolism, and growth. Inhibits dauer formation, by antagonizing daf-12. Specifically required for maintaining the timing of larval development and molting cycle rhythms. The chain is Period protein homolog lin-42 from Caenorhabditis elegans.